A 279-amino-acid polypeptide reads, in one-letter code: Energy-coupling factor transporter ATP-binding protein EcfA1 (279 aa).

In terms of domain architecture, ABC transporter spans Val6 to Gly240. Gly40–Ser47 lines the ATP pocket.

Belongs to the ABC transporter superfamily. Energy-coupling factor EcfA family. Forms a stable energy-coupling factor (ECF) transporter complex composed of 2 membrane-embedded substrate-binding proteins (S component), 2 ATP-binding proteins (A component) and 2 transmembrane proteins (T component).

The protein resides in the cell membrane. ATP-binding (A) component of a common energy-coupling factor (ECF) ABC-transporter complex. Unlike classic ABC transporters this ECF transporter provides the energy necessary to transport a number of different substrates. This is Energy-coupling factor transporter ATP-binding protein EcfA1 from Listeria monocytogenes serotype 4b (strain F2365).